Consider the following 644-residue polypeptide: 3D-(3,5/4)-trihydroxycyclohexane-1,2-dione hydrolase (644 aa).

Glu65 provides a ligand contact to thiamine diphosphate. The thiamine pyrophosphate binding stretch occupies residues 442–522; that stretch reads SLPGDLQRMW…INVLLFDNSG (81 aa). Mg(2+) is bound by residues Asp493 and Asn520.

Belongs to the TPP enzyme family. It depends on Mg(2+) as a cofactor. Thiamine diphosphate is required as a cofactor.

The catalysed reaction is 3D-3,5/4-trihydroxycyclohexane-1,2-dione + H2O = 5-deoxy-D-glucuronate + H(+). It functions in the pathway polyol metabolism; myo-inositol degradation into acetyl-CoA; acetyl-CoA from myo-inositol: step 3/7. Involved in the cleavage of the C1-C2 bond of 3D-(3,5/4)-trihydroxycyclohexane-1,2-dione (THcHDO) to yield 5-deoxy-glucuronate (5DG). The protein is 3D-(3,5/4)-trihydroxycyclohexane-1,2-dione hydrolase of Bacillus thuringiensis (strain Al Hakam).